The primary structure comprises 187 residues: UPF0340 protein SPD_0576 (187 aa).

It belongs to the UPF0340 family.

This is UPF0340 protein SPD_0576 from Streptococcus pneumoniae serotype 2 (strain D39 / NCTC 7466).